Reading from the N-terminus, the 148-residue chain is Large ribosomal subunit protein uL15 (148 aa).

Positions 1–51 (MNLSNLKPAEGSTKTRKRIGRGPGSGLGGTSTRGHKGAKSRSGYSKKIGFE) are disordered. A compositionally biased stretch (gly residues) spans 21 to 31 (RGPGSGLGGTS).

The protein belongs to the universal ribosomal protein uL15 family. Part of the 50S ribosomal subunit.

Its function is as follows. Binds to the 23S rRNA. In Phocaeicola vulgatus (strain ATCC 8482 / DSM 1447 / JCM 5826 / CCUG 4940 / NBRC 14291 / NCTC 11154) (Bacteroides vulgatus), this protein is Large ribosomal subunit protein uL15.